The following is a 497-amino-acid chain: Glycerol kinase (497 aa).

Threonine 12 provides a ligand contact to ADP. 3 residues coordinate ATP: threonine 12, threonine 13, and serine 14. Residue threonine 12 participates in sn-glycerol 3-phosphate binding. An ADP-binding site is contributed by arginine 16. Arginine 82, glutamate 83, tyrosine 134, and aspartate 243 together coordinate sn-glycerol 3-phosphate. Residues arginine 82, glutamate 83, tyrosine 134, aspartate 243, and glutamine 244 each contribute to the glycerol site. 2 residues coordinate ADP: threonine 265 and glycine 308. ATP contacts are provided by threonine 265, glycine 308, glutamine 312, and glycine 409. ADP-binding residues include glycine 409 and asparagine 413.

Belongs to the FGGY kinase family. Homotetramer and homodimer (in equilibrium).

The catalysed reaction is glycerol + ATP = sn-glycerol 3-phosphate + ADP + H(+). Its pathway is polyol metabolism; glycerol degradation via glycerol kinase pathway; sn-glycerol 3-phosphate from glycerol: step 1/1. Its activity is regulated as follows. Activated by phosphorylation and inhibited by fructose 1,6-bisphosphate (FBP). Its function is as follows. Key enzyme in the regulation of glycerol uptake and metabolism. Catalyzes the phosphorylation of glycerol to yield sn-glycerol 3-phosphate. The protein is Glycerol kinase of Thermoanaerobacter sp. (strain X514).